A 157-amino-acid polypeptide reads, in one-letter code: 3-hydroxybutyryl-CoA dehydratase (157 aa).

The MaoC-like domain maps to 22–120; the sequence is KKEISSSDVV…IPERRRARLA (99 aa).

The enzyme catalyses (3R)-3-hydroxybutanoyl-CoA = (2E)-butenoyl-CoA + H2O. Functionally, involved in the regeneration of glyoxylate from a molecule of acetyl-CoA. The polypeptide is 3-hydroxybutyryl-CoA dehydratase (Methylorubrum extorquens (strain ATCC 14718 / DSM 1338 / JCM 2805 / NCIMB 9133 / AM1) (Methylobacterium extorquens)).